Reading from the N-terminus, the 475-residue chain is Aspartyl/glutamyl-tRNA(Asn/Gln) amidotransferase subunit B (475 aa).

The protein belongs to the GatB/GatE family. GatB subfamily. In terms of assembly, heterotrimer of A, B and C subunits.

The enzyme catalyses L-glutamyl-tRNA(Gln) + L-glutamine + ATP + H2O = L-glutaminyl-tRNA(Gln) + L-glutamate + ADP + phosphate + H(+). The catalysed reaction is L-aspartyl-tRNA(Asn) + L-glutamine + ATP + H2O = L-asparaginyl-tRNA(Asn) + L-glutamate + ADP + phosphate + 2 H(+). Functionally, allows the formation of correctly charged Asn-tRNA(Asn) or Gln-tRNA(Gln) through the transamidation of misacylated Asp-tRNA(Asn) or Glu-tRNA(Gln) in organisms which lack either or both of asparaginyl-tRNA or glutaminyl-tRNA synthetases. The reaction takes place in the presence of glutamine and ATP through an activated phospho-Asp-tRNA(Asn) or phospho-Glu-tRNA(Gln). The protein is Aspartyl/glutamyl-tRNA(Asn/Gln) amidotransferase subunit B of Thiobacillus denitrificans (strain ATCC 25259 / T1).